The chain runs to 224 residues: Cerebellin-2 (224 aa).

The N-terminal stretch at 1–51 (MPAPGQGPRGPLLSMPGRRGALREPADFGSSLGAVLALLLLLLPACCPVRA) is a signal peptide. 2 N-linked (GlcNAc...) asparagine glycosylation sites follow: Asn53 and Asn110. Positions 88 to 224 (SGSAKVAFSA…TFSGFLVFPL (137 aa)) constitute a C1q domain.

Homohexamer; disulfide-linked homotrimers. The trimers are assembled via the globular C1q domains. The trimers associate via N-terminal cysteine residues to form disulfide-linked hexamers. May form homooligomers or heterooligomers with CBLN1 and CBLN3 prior to secretion. Once secreted, does not interact with other CBLN family members. Interacts with GRID2, and more weakly with GRID1. Interacts with NRXN1 and NRXN2 long and short isoforms produced by alternative promoter usage. Weakly interacts with NRXN3 short isoform and not at all with NRXN3 long isoform. Expressed in various brain regions with higher levels in the olfactory bulb, cerebral cortex, certain thalamic and hypothalamic nuclei, superior and inferior colliculi and some brainstem nuclei. Highly expressed in the dorsal medial habenula.

It is found in the secreted. In terms of biological role, acts as a synaptic organizer in specific subsets of neurons in the brain. Essential for long-term maintenance but not establishment of excitatory synapses. Functions as part of a trans-synaptic complex by binding to postsynaptic GRID1 and presynaptic neurexins. This interaction helps regulate the activity of NMDA and AMPA receptors at hippocampal synapses without affecting synapse formation. NRXN1B-CBLN2-GRID1 complex transduce presynaptic signals into postsynaptic NMDAR response. NRXN3B-CBLN2-GRID1 complex transduce presynaptic signals into postsynaptic AMPAR response. The polypeptide is Cerebellin-2 (Cbln2) (Mus musculus (Mouse)).